The chain runs to 124 residues: MEYEFRRNSLTGTFLASFSMDHEVLGQWFTEELGPELAKIQQVLDMIKEIQTDKRGAWRLVGNDFTLELEREQARVFANTLGFEQEYELEEAMSLYDAESEAYCGLEDFEQALLSWQTFIEKGL.

The protein belongs to the UPF0231 family.

This is UPF0231 protein Sbal223_3655 from Shewanella baltica (strain OS223).